Reading from the N-terminus, the 256-residue chain is ATP synthase subunit a (256 aa).

6 helical membrane-spanning segments follow: residues 33 to 53, 92 to 112, 122 to 142, 148 to 168, 191 to 211, and 235 to 255; these read ITTFTVYSVFILIVILGLTLL, YFPLIYTFFIFIFTANLIGMI, MVFIISLSVVIWLGVTIIGLY, FFALFVPAGCPLALAPLLVLI, GHLLMVILGGLVFNLMSVSIV, and MIQSYVFAILASGYIKDGLYL.

It belongs to the ATPase A chain family. In terms of assembly, F-type ATPases have 2 components, CF(1) - the catalytic core - and CF(0) - the membrane proton channel. CF(1) has five subunits: alpha(3), beta(3), gamma(1), delta(1), epsilon(1). CF(0) has three main subunits: a, b and c.

Its subcellular location is the mitochondrion inner membrane. Mitochondrial membrane ATP synthase (F(1)F(0) ATP synthase or Complex V) produces ATP from ADP in the presence of a proton gradient across the membrane which is generated by electron transport complexes of the respiratory chain. F-type ATPases consist of two structural domains, F(1) - containing the extramembraneous catalytic core and F(0) - containing the membrane proton channel, linked together by a central stalk and a peripheral stalk. During catalysis, ATP synthesis in the catalytic domain of F(1) is coupled via a rotary mechanism of the central stalk subunits to proton translocation. Key component of the proton channel; it may play a direct role in the translocation of protons across the membrane. The protein is ATP synthase subunit a (ATP6) of Wickerhamomyces canadensis (Yeast).